A 114-amino-acid polypeptide reads, in one-letter code: Ribonuclease P protein component (114 aa).

This sequence belongs to the RnpA family. In terms of assembly, consists of a catalytic RNA component (M1 or rnpB) and a protein subunit.

The catalysed reaction is Endonucleolytic cleavage of RNA, removing 5'-extranucleotides from tRNA precursor.. RNaseP catalyzes the removal of the 5'-leader sequence from pre-tRNA to produce the mature 5'-terminus. It can also cleave other RNA substrates such as 4.5S RNA. The protein component plays an auxiliary but essential role in vivo by binding to the 5'-leader sequence and broadening the substrate specificity of the ribozyme. This is Ribonuclease P protein component from Buchnera aphidicola subsp. Baizongia pistaciae (strain Bp).